A 341-amino-acid chain; its full sequence is Probable cytosolic iron-sulfur protein assembly protein Ciao1 (341 aa).

WD repeat units follow at residues 12-51 (GHAG…RWVA), 58-97 (GHTR…FECN), 102-141 (GHDN…DQED), 151-190 (GHTQ…SEWE), 197-236 (SHSS…NALG), 255-294 (YHSR…DRNE), and 305-341 (AHSQ…VDAD).

It belongs to the WD repeat CIA1 family.

Essential component of the cytosolic iron-sulfur (Fe/S) protein assembly machinery. Required for the maturation of extramitochondrial Fe/S proteins. This chain is Probable cytosolic iron-sulfur protein assembly protein Ciao1, found in Anopheles gambiae (African malaria mosquito).